Here is a 357-residue protein sequence, read N- to C-terminus: DNA replication and repair protein RecF (357 aa).

An ATP-binding site is contributed by 30 to 37; the sequence is GANGSGKT.

This sequence belongs to the RecF family.

It localises to the cytoplasm. The RecF protein is involved in DNA metabolism; it is required for DNA replication and normal SOS inducibility. RecF binds preferentially to single-stranded, linear DNA. It also seems to bind ATP. This is DNA replication and repair protein RecF from Klebsiella pneumoniae subsp. pneumoniae (strain ATCC 700721 / MGH 78578).